The following is a 296-amino-acid chain: Sperm-activating peptides (296 aa).

3 consecutive propeptides follow at residues 1-134 (MPPG…MYKK), 146-190 (MLSN…MILK), and 290-296 (EVEIKDW).

Its function is as follows. Causes stimulation of sperm respiration and motility through intracellular alkalinization, transient elevations of cAMP, cGMP and calcium levels in sperm cells, and transient activation and subsequent inactivation of the membrane form of guanylate cyclase. The chain is Sperm-activating peptides from Strongylocentrotus purpuratus (Purple sea urchin).